The primary structure comprises 267 residues: MRLEGKVALVTGGASGIGESIARLFIEHGAKICIVDVQDELGQQVSQRLGGDPHACYFHCDVTVEDDVRRAVDFTAEKYGTIDIMVNNAGITGDKVIDIRDADFNEFKKVFDINVNGVFLGMKHAARIMIPKMKGSIVSLASVSSVIAGAGPHGYTGAKHAVVGLTKSVAAELGRHGIRVNCVSPYAVPTRLSMPYLPESEMQEDALRGFLTFVRSNANLKGVDLMPNDVAEAVLYLATEESKYVSGLNLVIDGGFSIANHTLQVFE.

Leu9–Cys33 provides a ligand contact to NAD(+). A substrate-binding site is contributed by Ser142. The Proton acceptor role is filled by Tyr155.

The protein belongs to the short-chain dehydrogenases/reductases (SDR) family. Expressed in leaves, stems and rhizomes.

It catalyses the reaction 10-hydroxy-alpha-humulene + NAD(+) = zerumbone + NADH + H(+). Catalyzes 8-hydroxy-alpha-humulene into zerumbone in presence of NAD. Also converts borneol to camphor in vitro. Zerumbone is a highly promising multi-anticancer agent. In Zingiber zerumbet (Shampoo ginger), this protein is Zerumbone synthase (ZSD1).